Here is a 131-residue protein sequence, read N- to C-terminus: Small ribosomal subunit protein uS8 (131 aa).

Belongs to the universal ribosomal protein uS8 family. Part of the 30S ribosomal subunit. Contacts proteins S5 and S12.

Functionally, one of the primary rRNA binding proteins, it binds directly to 16S rRNA central domain where it helps coordinate assembly of the platform of the 30S subunit. The sequence is that of Small ribosomal subunit protein uS8 from Bordetella parapertussis (strain 12822 / ATCC BAA-587 / NCTC 13253).